Reading from the N-terminus, the 288-residue chain is Zinc finger protein ZAT9 (288 aa).

The C2H2-type 1 zinc finger occupies 4-26; the sequence is YKCRVCFKSFVNGKALGGHMRSH. 3 disordered regions span residues 20–82, 101–123, and 189–210; these read GGHM…LTRK, SQLG…DTTT, and GGHR…QRSE. Residues 37–52 show a composition bias toward polar residues; it reads PSQLSYETESDVSSSD. 2 consecutive C2H2-type zinc fingers follow at residues 173 to 195 and 224 to 246; these read YKCE…RASH and HECP…KRSH.

It localises to the nucleus. Functionally, probable transcription factor that may be involved in stress responses. The sequence is that of Zinc finger protein ZAT9 (ZAT9) from Arabidopsis thaliana (Mouse-ear cress).